A 118-amino-acid polypeptide reads, in one-letter code: Cycloviolacin-O8 (118 aa).

An N-terminal signal peptide occupies residues Met1–Ala22. A propeptide spanning residues Thr23–Gly84 is cleaved from the precursor. A cross-link (cyclopeptide (Gly-Asn)) is located at residues Gly85–Asn115. 3 disulfide bridges follow: Cys89–Cys105, Cys93–Cys107, and Cys98–Cys112. A propeptide spanning residues Ser116–Ala118 is cleaved from the precursor.

Post-translationally, cycloviolacin-O8 is a cyclic peptide. Expressed in leaves, petals, petioles and roots but not in runners (at protein level).

Probably participates in a plant defense mechanism. The polypeptide is Cycloviolacin-O8 (Voc1) (Viola odorata (Sweet violet)).